We begin with the raw amino-acid sequence, 710 residues long: MNYRGIYRRRYVFVLLLLVAVVNISYGWTVLKNKDYKRRYLSPSGVEKVRKHLSRKYVASRNNTQTFKKHYFSNTWAVHIDPPDNDVADRIAKKHGFTNIGKIGNIEGHYHFKHEEIGERELEKARHKTALLNLEDEVKFAEQQKILERVKRDGIPNDPYFKDMWYLLNTGQASGPAGVDMNVVPVWKKNITGRGIVISVLDDGLDWTHPDLEANYDQTASIVLNDNDNDPMPRDSDADNCHGTRCAGEAAAIANNGICGTGVAYNAKIGGVRMLDGQATDALEASALGFRGDHIDIYINCWGPKDDGKTFGKPGPMAAKALRLGAEQGRNRLGSIFVWATGNGGLTDDDCNCDGYTTSIFTISIGCIGDHGLSAYYTEKCSSTLAVTFNGASHKEGRENKMVTTDLYHQCTEEFKGTSASAPLAAGIIALTLEANPLLTWRDVQALIVHTAQITSPVDEGWKRNGAGFHFNHKFGFGRLDANAMVNAAQSWKNLPAQRKCTAASGFDHQDIPRGDSLFINIPTVACESSSAQIAKVEHVVLTVSFVHRRRGDVSIDLISPKDTKSQMLSPRKYDDSDEGLDEWSFMTVYNWGENPKGIWRLKITDNPNQDDVMNLFNGDNTDDVESLEERVIDTQTKQNKAEWEKMRKENPYFDVPYPNGVRKNKVTIEGSTQDHVKPKEGAKEPWGNYRNTNNINNNSSTAFKRKKKQ.

An N-terminal signal peptide occupies residues 1–29; that stretch reads MNYRGIYRRRYVFVLLLLVAVVNISYGWT. 3 N-linked (GlcNAc...) asparagine glycosylation sites follow: asparagine 23, asparagine 62, and asparagine 190. A propeptide spanning residues 30–152 is cleaved from the precursor; sequence VLKNKDYKRR…QQKILERVKR (123 aa). The 323-residue stretch at 164–486 folds into the Peptidase S8 domain; the sequence is MWYLLNTGQA…FGRLDANAMV (323 aa). Catalysis depends on charge relay system residues aspartate 202 and histidine 242. 2 disulfides stabilise this stretch: cysteine 259-cysteine 411 and cysteine 351-cysteine 381. The Charge relay system role is filled by serine 419. Positions 495–638 constitute a P/Homo B domain; that stretch reads LPAQRKCTAA…EERVIDTQTK (144 aa). Cysteine 501 and cysteine 527 are joined by a disulfide. A disordered region spans residues 668–710; it reads TIEGSTQDHVKPKEGAKEPWGNYRNTNNINNNSSTAFKRKKKQ. Residues 673–684 are compositionally biased toward basic and acidic residues; sequence TQDHVKPKEGAK. A compositionally biased stretch (low complexity) spans 689–699; sequence NYRNTNNINNN. N-linked (GlcNAc...) asparagine glycosylation is found at asparagine 698 and asparagine 699.

Belongs to the peptidase S8 family. Furin subfamily. As to expression, predominantly in the body column.

Probably involved in the processing of hormone and other protein precursors at sites comprised of pairs of basic amino acid residues. The chain is PC3-like endoprotease variant B from Hydra vulgaris (Hydra).